The chain runs to 1052 residues: RIMS-binding protein 2 (1052 aa).

Positions 115–164 are disordered; it reads GEYIRPLPQPGDRPEPLSAKPTFLSRSGSARCRSESDMENERNSNTSKQR. Basic and acidic residues predominate over residues 146-156; the sequence is CRSESDMENER. The 68-residue stretch at 167-234 folds into the SH3 1 domain; it reads GKVHLCVARY…PSNFVDFVQD (68 aa). Fibronectin type-III domains lie at 297–390, 393–475, and 489–590; these read VPYP…GKDV, APSH…KKEA, and PPQD…VPPT. Disordered regions lie at residues 584–615, 629–666, 697–716, 767–787, and 805–829; these read ELLV…DEHL, RAPG…PVST, SAGQ…PDFK, EMQL…NALK, and FPRG…YGRD. Residues 585–598 are compositionally biased toward pro residues; sequence LLVPPTPHPRPAPQ. Residues 645 to 654 are compositionally biased toward low complexity; the sequence is PGRRSPSPSR. A phosphoserine mark is found at Ser704 and Ser712. Ser832 and Ser839 each carry phosphoserine. A Phosphothreonine modification is found at Thr841. 2 SH3 domains span residues 848 to 916 and 952 to 1019; these read LPAR…EIQA and VSTR…EVPD. The interval 1029 to 1052 is disordered; sequence PSHYSQDTPMRSKAKRKKSVHFTP. Positions 1040 to 1052 are enriched in basic residues; the sequence is SKAKRKKSVHFTP.

It belongs to the RIMBP family. As to quaternary structure, interacts with RIMS1, RIMS2, CACNA1D and CACNA1B, and potentially with other Ca(2+) channel alpha-1 isoforms.

Its subcellular location is the cell membrane. It localises to the synapse. Functionally, plays a role in the synaptic transmission as bifunctional linker that interacts simultaneously with RIMS1, RIMS2, CACNA1D and CACNA1B. This is RIMS-binding protein 2 (RIMBP2) from Homo sapiens (Human).